Consider the following 213-residue polypeptide: LexA repressor (213 aa).

The segment at residues 31–51 (RAEISRELGFRSPNAAEEYLK) is a DNA-binding region (H-T-H motif). Catalysis depends on for autocatalytic cleavage activity residues S129 and K166.

Belongs to the peptidase S24 family. In terms of assembly, homodimer.

It catalyses the reaction Hydrolysis of Ala-|-Gly bond in repressor LexA.. Functionally, represses a number of genes involved in the response to DNA damage (SOS response), including recA and lexA. In the presence of single-stranded DNA, RecA interacts with LexA causing an autocatalytic cleavage which disrupts the DNA-binding part of LexA, leading to derepression of the SOS regulon and eventually DNA repair. In Mannheimia succiniciproducens (strain KCTC 0769BP / MBEL55E), this protein is LexA repressor.